A 33-amino-acid polypeptide reads, in one-letter code: Putative makorin-5 (33 aa).

This is Putative makorin-5 (MKRN9P) from Homo sapiens (Human).